The sequence spans 857 residues: Median body protein (857 aa).

Coiled coils occupy residues 169-546 (HNAL…MRTE) and 571-793 (LAHL…TKAM).

The protein localises to the cytoplasm. Its subcellular location is the cytoskeleton. Structural component of the ventral disk involved in maintanance of a domed conformation of the disk required for proper attachment. May have a role in immobilizing the microtubules between cell divisions. The protein is Median body protein of Giardia intestinalis (strain ATCC 50803 / WB clone C6) (Giardia lamblia).